The primary structure comprises 151 residues: Aspartate carbamoyltransferase regulatory chain (151 aa).

Zn(2+) contacts are provided by C107, C112, C135, and C138.

Belongs to the PyrI family. As to quaternary structure, contains catalytic and regulatory chains. Zn(2+) serves as cofactor.

Its function is as follows. Involved in allosteric regulation of aspartate carbamoyltransferase. The sequence is that of Aspartate carbamoyltransferase regulatory chain from Thermococcus onnurineus (strain NA1).